The sequence spans 98 residues: NADH-ubiquinone oxidoreductase chain 4L (98 aa).

Helical transmembrane passes span 2-22 (PSIS…MLMF), 29-49 (SLLC…LTIL), and 61-81 (ILLL…LVMV).

This sequence belongs to the complex I subunit 4L family. Core subunit of respiratory chain NADH dehydrogenase (Complex I) which is composed of 45 different subunits.

It localises to the mitochondrion inner membrane. The enzyme catalyses a ubiquinone + NADH + 5 H(+)(in) = a ubiquinol + NAD(+) + 4 H(+)(out). In terms of biological role, core subunit of the mitochondrial membrane respiratory chain NADH dehydrogenase (Complex I) which catalyzes electron transfer from NADH through the respiratory chain, using ubiquinone as an electron acceptor. Part of the enzyme membrane arm which is embedded in the lipid bilayer and involved in proton translocation. The protein is NADH-ubiquinone oxidoreductase chain 4L (MT-ND4L) of Microcebus simmonsi (Simmons's mouse lemur).